We begin with the raw amino-acid sequence, 1140 residues long: MKRLQYRFLLFGFALGSFGWFVASSAFTSVVKSNNETLSSDGGVHMRYLKGKGDVLSILKSKSPAITQRFDLKWNNGKKTEVYLNNVNNYISESLYAQEALKQIERTAQLSIQNGELPDVKVYTNSGASFGLVGWHTDNGRTWAFRHENKYDKNVHFSWNQTYYKYSNRERTASNPYYWKWVAWFDLGYANQRIGLVENDEYHIDKRVPEPTPRKWDKNKPLWGDIRSKILYSAERLDPDKGIFIWFNQTGFNTKGTKGWANSGFFTDFWDTNNNPNAFTTNITSEGGNSNWHSPDWGSHTTDTRFFLKLEPYSKLFYKENGQERSITVSDYIRKAKSTKTNYQWVNKNQIKTLVRKTRSIDLGLGSAVRQTYTTKSDIASNQQLKYKLKDSTFSIDTYNNFKLDKLLVPKTNEDATAIKNGVFVKQPTLSFDFNPVLTNAIVNIHNLFAQTLDLKEHLKSDQPYNESDKAAINKVIEQIKNKEVDYIQVADFIGKLKNWSQNPGSIESKGENTAQWYADAKREFGLNLNDDVNTWTQLSSLIASYFSKDIFANVKLNGAKERRMKVWDGAKFEFIPIENTEKQSEQLANENRAEIAVSAIGFQDEGGLRDASFINKVALTPKSSKTKIANGDASKIEKAANEISYKYHYRQNFKQASWDKQNSQTKSIVVQSTDLNDERERFQKDINNYLKVQGISETEIKVNAVHKVDAMLNARKSDDPKLASVQSTANKYGLNLRSNPYTGQFYVVVDVTNANDLGNQRRANNAKSYFYYIEGLDKGAQSSYLVRFENKQKLYSLESLAVDSRGLYVKNVSKDAIIQAKQNQNLYLDTHNWNAALKANLTNAELTLPTASADNSAKLSTPNAENDEGFLSENVSGSILGYVERMTGKKLFLKERVSFNKEDKNNLKLRLTSNFTLDKKGNLEVKDPSVINQIVEEAKGYNVLVSEEKGDDPESDKNIFKITLTTNPEQSTVIKLPYWIVTKKSKTNKDGTVREQKNLVFDFSNLNNFEYNTVVSLLFTDSSFIKNAYAPLQTEFRKQLKTVLEHKYQAPIKTGQLPLLTKVQLANNQKQIDNFTFDLHKNIFNKEDINKINWPLIAITFTGSAALLSTIIASGVVLHRWRKSRKHFWEQMLKARKVK.

A run of 2 helical transmembrane segments spans residues 8 to 28 and 1098 to 1118; these read FLLFGFALGSFGWFVASSAFT and IAITFTGSAALLSTIIASGVV.

To M.pneumoniae MPN_375 (in the N-terminal section), M.pneumoniae MPN_374 (in the central section) and M.pneumoniae MPN_373 (in the C-terminal section).

It is found in the cell membrane. This is an uncharacterized protein from Mycoplasma pneumoniae (strain ATCC 29342 / M129 / Subtype 1) (Mycoplasmoides pneumoniae).